A 423-amino-acid polypeptide reads, in one-letter code: Steroid hormone receptor ERR1 (423 aa).

Residues 1–67 are disordered; that stretch reads MSSQVVGIEP…GAGPGEQGGG (67 aa). Positions 1–76 are repressor domain; it reads MSSQVVGIEP…GKLVLSSLPK (76 aa). Lys14 participates in a covalent cross-link: Glycyl lysine isopeptide (Lys-Gly) (interchain with G-Cter in SUMO). Phosphoserine is present on residues Ser19 and Ser22. The span at 58–67 shows a compositional bias: gly residues; the sequence is GAGPGEQGGG. The nuclear receptor DNA-binding region spans 76-151; sequence KRLCLVCGDV…VGMLKEGVRL (76 aa). 2 consecutive NR C4-type zinc fingers follow at residues 79-99 and 115-134; these read CLVC…CEAC and CPAS…CQAC. Lys129, Lys138, Lys160, and Lys162 each carry N6-acetyllysine; by PCAF/KAT2B. A Glycyl lysine isopeptide (Lys-Gly) (interchain with G-Cter in SUMO2) cross-link involves residue Lys189. One can recognise an NR LBD domain in the interval 193–421; the sequence is PVNALVSHLL…KLFLEMLEAM (229 aa). Lys403 participates in a covalent cross-link: Glycyl lysine isopeptide (Lys-Gly) (interchain with G-Cter in SUMO); alternate. Residue Lys403 forms a Glycyl lysine isopeptide (Lys-Gly) (interchain with G-Cter in SUMO2); alternate linkage. The AF-2 domain stretch occupies residues 403–423; the sequence is KLEGKVPMHKLFLEMLEAMMD.

This sequence belongs to the nuclear hormone receptor family. NR3 subfamily. In terms of assembly, binds DNA as a monomer or a homodimer. Interacts (via the AF2 domain) with coactivator PPARGC1A (via the L3 motif); the interaction greatly enhances transcriptional activity of genes involved in energy metabolism. Interacts with PIAS4; the interaction enhances sumoylation. Interacts with MAPK15; promotes re-localization of ESRRA to the cytoplasm through a XPO1-dependent mechanism then inhibits ESRRA transcriptional activity. In terms of processing, phosphorylation on Ser-19 enhances sumoylation on Lys-14 increasing repression of transcriptional activity. Post-translationally, sumoylated with SUMO2. Main site is Lys-14 which is enhanced by phosphorylation on Ser-19, cofactor activation, and by interaction with PIAS4. Sumoylation enhances repression of transcriptional activity, but has no effect on subcellular location nor on DNA binding. Reversibly acetylated. Acetylation by PCAF/KAT2 at Lys-129, Lys-138, Lys-160 and Lys-162 and PCAF/KAT2 decreases transcriptional activity probably by inhibiting DNA-binding activity; deacetylation involves SIRT1 and HDAC8 and increases DNA-binding.

It localises to the nucleus. It is found in the cytoplasm. Functionally, binds to an ERR-alpha response element (ERRE) containing a single consensus half-site, 5'-TNAAGGTCA-3'. Can bind to the medium-chain acyl coenzyme A dehydrogenase (MCAD) response element NRRE-1 and may act as an important regulator of MCAD promoter. Binds to the C1 region of the lactoferrin gene promoter. Requires dimerization and the coactivator, PGC-1A, for full activity. The ERRalpha/PGC1alpha complex is a regulator of energy metabolism. Induces the expression of PERM1 in the skeletal muscle. This Homo sapiens (Human) protein is Steroid hormone receptor ERR1 (ESRRA).